The following is a 944-amino-acid chain: Respiratory burst oxidase homolog protein F (944 aa).

At 2-387 (KPFSKNDRRR…VYIMQENWKR (386 aa)) the chain is on the cytoplasmic side. Coiled coils occupy residues 102–126 (QFSQELKAEAVAKAKQLSQELKRFS) and 157–184 (LEARALRKQRAQLDRTRSSAQRALRGLR). 2 EF-hand-like regions span residues 207-215 (EKNGYIYRS) and 241-252 (RRLKVEKINHDE). 2 EF-hand domains span residues 264–299 (SFDSRLQIFFDIVDKNEDGRITEEEVKEIIMLSASA) and 308–343 (QAEEYAALIMEELDPERLGYIELWQLETLLLQKDTY). The Ca(2+) site is built by Asp277, Asn279, Asp281, Arg283, Glu288, Asp321, and Tyr327. 2 positions are modified to phosphoserine: Ser354 and Ser358. A helical membrane pass occupies residues 388–408 (IWVLSLWIMIMIGLFLWKFFQ). Topologically, residues 409-475 (YKQKDAFHVM…INFHKTIAGA (67 aa)) are extracellular. Positions 426–583 (KGAAETLKFN…LFVIVYILLI (158 aa)) constitute a Ferric oxidoreductase domain. The chain crosses the membrane as a helical span at residues 476 to 492 (IVVAVILHIGDHLACDF). Residues 493–527 (PRIVRATEYDYNRYLFHYFQTKQPTYFDLVKGPEG) are Cytoplasmic-facing. A helical membrane pass occupies residues 528–548 (ITGILMVILMIISFTLATRWF). Topologically, residues 549–570 (RRNLVKLPKPFDRLTGFNAFWY) are extracellular. The chain crosses the membrane as a helical span at residues 571 to 591 (SHHLFVIVYILLILHGIFLYF). At 592–599 (AKPWYVRT) the chain is on the cytoplasmic side. A helical membrane pass occupies residues 600-617 (TWMYLAVPVLLYGGERTL). Over 618 to 744 (RYFRSGSYSV…PYGAPAQDYR (127 aa)) the chain is Extracellular. One can recognise an FAD-binding FR-type domain in the interval 622–742 (SGSYSVRLLK…DGPYGAPAQD (121 aa)). Residues 745 to 765 (KYDVLLLVGLGIGATPFISIL) form a helical membrane-spanning segment. Residues 766-944 (KDLLNNIVKM…TKFEFHKEHF (179 aa)) are Cytoplasmic-facing.

Belongs to the RBOH (TC 5.B.1.3) family. Monomer and homodimer. Interacts (via N-terminus) with CIPK26. Interacts (via N-terminus) with SRC2. Post-translationally, not glycosylated. Phosphorylated by CIPK26. Expressed in roots, stems, seedlings, inflorescences, leaves and guard cells.

The protein localises to the cell membrane. Its activity is regulated as follows. Inhibited by diphenylene iodonium (DPI). Functionally, calcium-dependent NADPH oxidase that generates superoxide. Generates reactive oxygen species (ROS) during incompatible interactions with pathogens and is important in the regulation of the hypersensitive response (HR). Involved in abscisic acid-induced stomatal closing and in UV-B and abscisic acid ROS-dependent signaling. The polypeptide is Respiratory burst oxidase homolog protein F (RBOHF) (Arabidopsis thaliana (Mouse-ear cress)).